A 464-amino-acid chain; its full sequence is MEFLPLFHNLRGSRVLVVGGGEIALRKSRLIADAGAVLRVVAPEIEAQLSELVVQSGGEMILRGYSESDLDGCVLIIAATDDEPLNAQVSHDARLRCVPVNVVDAPALCTVIFPAIVDRSPLVIAVSSGGDAPVLARLIRAKLETWIPSTYGQLAGLAARFRNQVKGLFPNVQQRRAFWEDVFQGAIADRQLAGQGAEAERLLIAKIAGEPPPETGEVYLVGAGPGDPDLLTFRALRLMQQADVVLYDRLVAPTILDLCRRDAERVYVGKRRAEHAVPQEQINQQLVALAKQGKRVVRLKGGDPFIFGRGGEEIEELAVHGIPFQVVPGITAASGCAAYAGIPLTHRDHAQSVRFITGHLKDGTTDLPWSDLVAPAQTLVFYMGLIGLPVICEELIRHGRSADTPAALVQQGTTVNQRVFTGTLANLPQLVAEHEVHAPTLVIIGEVVKLREKLAWFEGAQATV.

The interval Met-1 to Leu-203 is precorrin-2 dehydrogenase /sirohydrochlorin ferrochelatase. NAD(+) contacts are provided by residues Glu-22–Ile-23 and Pro-43–Glu-44. At Ser-128 the chain carries Phosphoserine. A uroporphyrinogen-III C-methyltransferase region spans residues Gly-216–Val-464. Pro-225 contacts S-adenosyl-L-methionine. Asp-248 (proton acceptor) is an active-site residue. Lys-270 functions as the Proton donor in the catalytic mechanism. S-adenosyl-L-methionine is bound by residues Gly-301–Asp-303, Ile-306, Thr-331–Ala-332, Met-383, and Gly-412.

In the N-terminal section; belongs to the precorrin-2 dehydrogenase / sirohydrochlorin ferrochelatase family. The protein in the C-terminal section; belongs to the precorrin methyltransferase family.

The enzyme catalyses uroporphyrinogen III + 2 S-adenosyl-L-methionine = precorrin-2 + 2 S-adenosyl-L-homocysteine + H(+). It catalyses the reaction precorrin-2 + NAD(+) = sirohydrochlorin + NADH + 2 H(+). The catalysed reaction is siroheme + 2 H(+) = sirohydrochlorin + Fe(2+). Its pathway is cofactor biosynthesis; adenosylcobalamin biosynthesis; precorrin-2 from uroporphyrinogen III: step 1/1. It functions in the pathway cofactor biosynthesis; adenosylcobalamin biosynthesis; sirohydrochlorin from precorrin-2: step 1/1. It participates in porphyrin-containing compound metabolism; siroheme biosynthesis; precorrin-2 from uroporphyrinogen III: step 1/1. The protein operates within porphyrin-containing compound metabolism; siroheme biosynthesis; siroheme from sirohydrochlorin: step 1/1. Its pathway is porphyrin-containing compound metabolism; siroheme biosynthesis; sirohydrochlorin from precorrin-2: step 1/1. Multifunctional enzyme that catalyzes the SAM-dependent methylations of uroporphyrinogen III at position C-2 and C-7 to form precorrin-2 via precorrin-1. Then it catalyzes the NAD-dependent ring dehydrogenation of precorrin-2 to yield sirohydrochlorin. Finally, it catalyzes the ferrochelation of sirohydrochlorin to yield siroheme. The protein is Siroheme synthase of Pseudomonas savastanoi pv. phaseolicola (strain 1448A / Race 6) (Pseudomonas syringae pv. phaseolicola (strain 1448A / Race 6)).